A 164-amino-acid polypeptide reads, in one-letter code: MRRVVCPGSFDPVTNGHIDIIRRAAKQNEEVIVAVLVNVNKRGLFTADEKLEMLREATKEFDNVTVAKFDGLLVDFCRAHDVSAIVRSLRSVSDFDYELQIAQMNYQLSGIDTLFLTANPKYSFLSSSLVREIAQYNGDVSALVPPYVEERLRAKYAELAKKNG.

Ser9 contributes to the substrate binding site. ATP-binding positions include 9–10 (SF) and His17. Residues Lys41, Leu73, and Arg87 each coordinate substrate. ATP contacts are provided by residues Glu98 and 122–128 (YSFLSSS).

The protein belongs to the bacterial CoaD family. As to quaternary structure, homohexamer. It depends on Mg(2+) as a cofactor.

The protein resides in the cytoplasm. The catalysed reaction is (R)-4'-phosphopantetheine + ATP + H(+) = 3'-dephospho-CoA + diphosphate. It participates in cofactor biosynthesis; coenzyme A biosynthesis; CoA from (R)-pantothenate: step 4/5. Its function is as follows. Reversibly transfers an adenylyl group from ATP to 4'-phosphopantetheine, yielding dephospho-CoA (dPCoA) and pyrophosphate. In Thermobifida fusca (strain YX), this protein is Phosphopantetheine adenylyltransferase.